A 180-amino-acid chain; its full sequence is Putative 5'(3')-deoxyribonucleotidase (180 aa).

The active-site Nucleophile is aspartate 9. Residues aspartate 9, aspartate 11, and aspartate 135 each coordinate Mg(2+). Aspartate 11 functions as the Proton donor in the catalytic mechanism.

This sequence belongs to the 5'(3')-deoxyribonucleotidase family. Mg(2+) serves as cofactor.

Functionally, dephosphorylates the 5' and 2'(3')-phosphates of deoxyribonucleotides. This Staphylococcus aureus (strain MSSA476) protein is Putative 5'(3')-deoxyribonucleotidase.